We begin with the raw amino-acid sequence, 2715 residues long: MNNKFIIFSLLLALVASQTYSLTSCTCAQLLSEGDCIKNVSLGCSWDTTKKTCGVSTTPVTPTVTYAAYCDTFAETDCPKAKPCTDCGNYAACAWVESKCTFFTGCTPFAKTLDSECQAISNRCITDGTHCVEVDACSTYKKQLPCAKNAAGSLCYWDTTNNTCVDANTCDKLPATFATDKDCRDVISTCTTKTGGGCVDSGNNCSDQTLEIQCVWNKLKTTSCYWDGAACKDRICDNAPTSLTTDDACKTFRTDGTCTTKANGGCVTRTTCAAATIQASCIKNSSGGDCYWTGTACVDKACANTPTTIATNSACAGFVTGCITKSGGGCVVNGACSVANVQAACVKNPSNFDCIWDTTCKEKTCANASTTNNTHDLCTSYLSTCTVKSGGGCQNRTCANAPTTMTTNDACEAYFTGNNCITKSGGGCVTNTTCAAITLEAACVKNSSGSTCFWDTASSSCKDKTCVNAPATNTTHDLCQPFLNTCTVNSTSAGCVEKTCENSLVLAICDKDTSSRACIWKGKCYKKQCVLASSATTTHADCQTYHSTCTLSNSGTGCVPLPLKCEAITIEAACNLKANGQPCGWNGSQCIDKACSTASKTFTTTSQCTGHISTCVANNPVTVNGSLTIQGCQDLPTTCARRKSSENCEITRVGFPTCLWVSSSTSCVEKSCATASTVGTTGALSAGGFTFSGCQTYLNTCISNNTADGCIAKPSSCSSLVSSNCRDGSKASGDCYWNGSSCVDKTCANIIQTTHNSCNTTFNQCTVNNGGTACQTLATACTSYSTQENCKFTSTNKNCVWTGLACRNATCADAPDTTAYDSDTECLAYPTPSETCTVVYKVGAQGCVSKSANCSDYMTSAQCHKTLTNLTANDDCKWIVDRCYALSSFATGACTTFKGTKTMCEGYRAGCTNTVGAASSASCTLDCTLKTGSGLTFADCQALDSTCSVKKDGTGCIAIQSTCAGYGSTAANCFRSSASGTAGYCAMNTNCQSVTSAAECAFVTGLTGLDHSKCQLYHSSCTSLKDGTGCQEYKTTCSGYAATNNCATSGQGKCFFDVECLRFSNCASITGTGLTTAICGTYDAGCVANVNGTACQEKLATCDLYLTQNSCSTSAAAATADKCAWSGTACLAVTTVGTHCPYVTGTGLTDLICAAYNANCTANKAGTACQEKKATCNLYTTEATCSTSAAAATADKCAWSGAACLAVTTVATECAYVTGTGLTDLICAAYNANCTANKAGTACQEKKATCNLYTTEATCSTSAAAATADKCAWSGAACLAVTTVATECAYVTGTGLTNAICAAYNANCTANKAGTACQEKKATCNLYTTEATCSTSAAAATADKCAWSGAACLAVTTVATECAYVTGTGLTNAICAAYNANCTANKAGTACQEKKATCNLYTTEATCSTSAAAATADKCAWSGAACLAVTTVATECAYVTGTGLTKAICATYNAGCINLKDGTGCQEAKANCKDYTTSNKCTAQTTSTLSCLWIDNSCYPVTDLNCSVITGLGFVHAQCQAYSTGCTSVSDGSKCQDFKSTCEQYPGTTLGCTKTASTKCYLQGSACITISNVATDCAKITGSAGTITFEICQSYNTGCSVNRARSACVQQQAQCSGYTSAMTSCYKSGAGLCIASTNTDTACVAATAATCDAVYLGAGNYSSANCNEMKAGCTNNGTTACVAKTCANAAGITFNHTNCNSYLNTCTVNSGNSACQTMASKCADQTQASCLYSVEGECVVVGTSCVRKTCDTAATDATRDDDTECSTYQQSCTVARLGACQARAACATYKSSLQCKFNTSGGKCFWNPTNKTCVDLNCGNIEATTLYDTHNECVAVDATLACTVRATNGAAAQGCMARGACASYTIEEQCKTNASNGVCVWNTNANLPAPACQDKSCTSAPTSTTTHNDCYAYYNTATVKCTVVATPSNSGGNPTLGGCQQTAACSSYIDKEQCQINANGDPCGWNGTQCADKSCATASATADYDDDTKCRAYITNKCTVSDSGQGCVEIPATCETMTQKQCYYNKAGDPCYWTGTACITKSCDNAPDATATADECNTYLAGCTLNNVKCKTKVCEDFAFATDALCKQAISTCTTNGTNCVTRGTCFQALSQAGCVTSSTNQQCEWIPAVLNASNVITSPAYCTIKNCSTAPITLTSEAACAGYFTNCTTKNGGGCVTKSTCSAVTIDVACTTALNGTVCAWDSAQNKCRDKDCQDFSGTTHAACQAQRAGCTAGAGGKCARVQNCEQTSVRAACIEGTNGPCLWIDKYQNTDGTKGACFRYTSCKSLNWNNDSSCKWISNKCTTNGSNCVGITLCSETNTDGGCVTGYDGACIQSVPDLNSSDPKVCKPYTSCADAFYTTHSDCQIASSKCTTNGTTGCIALGSCSSYTVQAGCYFNDKGTLYTSGVITSTGICTWDTTSSSCRDQSCADLTGTTHATCSSQLSTCTSDGTTCLLKGACTSYTTQTACTTAVGSDGACYWELASATNNNTAKCRLLTCADIQNGTATNVCSVALSTCVSNGTACIPKANCSTYTSKVACNSGGLDGICVFTQSTATGAAAGTGTCALMTACTVANNDQTACQAARDRCSWTAASGTRATAVASKCATHTCATNQATNGACTRFLNWDKKTQQVCTLVSGACTATDPSSFSSNDCFLVSGYTYTCNASTSKCGVCTAVVVQPNTTDNNTNTTDNNTTTDSGYILGLSIVLGYLMF.

Positions 1–20 (MNNKFIIFSLLLALVASQTY) are cleaved as a signal peptide. PSA repeat units follow at residues 111-171 (KTLD…NTCD), 177-237 (FATD…RICD), 243-303 (LTTD…KACA), 309-366 (IATN…KTCA), 372-404 (NNTH…APTT), 405-467 (MTTN…KTCV), 473-530 (NTTH…KQCV), 536-596 (TTTH…KACS), 602-673 (FTTT…KSCA), 688-748 (GFTF…KTCA), 752-812 (QTTH…ATCA), 820-895 (YDSD…GACT), 934-1001 (GLTF…AECA), 1008-1067 (GLDH…SNCA), 1073-1141 (GLTT…THCP), 1147-1215 (GLTD…TECA), 1221-1289 (GLTD…TECA), 1295-1363 (GLTN…TECA), 1369-1437 (GLTN…TECA), 1443-1507 (GLTK…LNCS), 1513-1578 (GFVH…TDCA), 1586-1652 (TITF…ATCD), 1693-1751 (TFNH…KTCD), 1759-1819 (RDDD…LNCG), 1827-1898 (YDTH…KSCT), 1904-1976 (TTTH…KSCA), 1984-2044 (YDDD…KSCD), 2080-2149 (FATD…KNCS), 2155-2215 (LTSE…KDCQ), 2219-2286 (GTTH…TSCK), 2290-2355 (WNND…TSCA), 2359-2430 (YTTH…QSCA), 2434-2500 (GTTH…LTCA), and 2505-2573 (GTAT…TACT).

Its subcellular location is the cell membrane. In terms of biological role, this protein is the surface antigen or immobilization antigen of Paramecium primaurelia. In Paramecium primaurelia, this protein is G surface protein, allelic form 156 (156G).